The following is a 149-amino-acid chain: Nucleoside diphosphate kinase (149 aa).

ATP contacts are provided by K9, F57, R85, T91, R102, and N112. H115 serves as the catalytic Pros-phosphohistidine intermediate.

This sequence belongs to the NDK family. As to quaternary structure, homotetramer. It depends on Mg(2+) as a cofactor.

It localises to the cytoplasm. The catalysed reaction is a 2'-deoxyribonucleoside 5'-diphosphate + ATP = a 2'-deoxyribonucleoside 5'-triphosphate + ADP. The enzyme catalyses a ribonucleoside 5'-diphosphate + ATP = a ribonucleoside 5'-triphosphate + ADP. Functionally, major role in the synthesis of nucleoside triphosphates other than ATP. The ATP gamma phosphate is transferred to the NDP beta phosphate via a ping-pong mechanism, using a phosphorylated active-site intermediate. In Desulforamulus reducens (strain ATCC BAA-1160 / DSM 100696 / MI-1) (Desulfotomaculum reducens), this protein is Nucleoside diphosphate kinase.